Consider the following 219-residue polypeptide: 7-carboxy-7-deazaguanine synthase (219 aa).

Substrate contacts are provided by residues 12-14 (IQG) and arginine 27. A Radical SAM core domain is found at 18–219 (YTGTPSIFIR…VQIHKYLKIR (202 aa)). [4Fe-4S] cluster contacts are provided by cysteine 31, cysteine 35, and cysteine 38. Threonine 40 contributes to the Mg(2+) binding site. Threonine 92 is a binding site for substrate. Residues glycine 94 and 136–138 (SPK) contribute to the S-adenosyl-L-methionine site.

It belongs to the radical SAM superfamily. 7-carboxy-7-deazaguanine synthase family. In terms of assembly, homodimer. [4Fe-4S] cluster is required as a cofactor. S-adenosyl-L-methionine serves as cofactor. Requires Mg(2+) as cofactor.

It catalyses the reaction 6-carboxy-5,6,7,8-tetrahydropterin + H(+) = 7-carboxy-7-deazaguanine + NH4(+). The protein operates within purine metabolism; 7-cyano-7-deazaguanine biosynthesis. In terms of biological role, catalyzes the complex heterocyclic radical-mediated conversion of 6-carboxy-5,6,7,8-tetrahydropterin (CPH4) to 7-carboxy-7-deazaguanine (CDG), a step common to the biosynthetic pathways of all 7-deazapurine-containing compounds. The polypeptide is 7-carboxy-7-deazaguanine synthase (Buchnera aphidicola subsp. Schizaphis graminum (strain Sg)).